The chain runs to 70 residues: MLNPSIDSLLQKIDSKYTLVTVAAKRAREMQLANNCVVEQPVSHKCVGKALEEIDAEVLSYVPSEDKVAE.

The protein belongs to the RNA polymerase subunit omega family. As to quaternary structure, the RNAP catalytic core consists of 2 alpha, 1 beta, 1 beta' and 1 omega subunit. When a sigma factor is associated with the core the holoenzyme is formed, which can initiate transcription.

The catalysed reaction is RNA(n) + a ribonucleoside 5'-triphosphate = RNA(n+1) + diphosphate. Promotes RNA polymerase assembly. Latches the N- and C-terminal regions of the beta' subunit thereby facilitating its interaction with the beta and alpha subunits. This Bacillus cereus (strain G9842) protein is DNA-directed RNA polymerase subunit omega.